The chain runs to 364 residues: Phosphoserine aminotransferase (364 aa).

Arginine 40 is a binding site for L-glutamate. Residues 74–75 (GT), tryptophan 100, threonine 149, aspartate 170, and glutamine 193 contribute to the pyridoxal 5'-phosphate site. N6-(pyridoxal phosphate)lysine is present on lysine 194. A pyridoxal 5'-phosphate-binding site is contributed by 235-236 (NT).

The protein belongs to the class-V pyridoxal-phosphate-dependent aminotransferase family. SerC subfamily. In terms of assembly, homodimer. Requires pyridoxal 5'-phosphate as cofactor. Expressed in ovary and head.

It catalyses the reaction O-phospho-L-serine + 2-oxoglutarate = 3-phosphooxypyruvate + L-glutamate. The enzyme catalyses 4-(phosphooxy)-L-threonine + 2-oxoglutarate = (R)-3-hydroxy-2-oxo-4-phosphooxybutanoate + L-glutamate. It functions in the pathway amino-acid biosynthesis; L-serine biosynthesis; L-serine from 3-phospho-D-glycerate: step 2/3. The protein operates within cofactor biosynthesis; pyridoxine 5'-phosphate biosynthesis; pyridoxine 5'-phosphate from D-erythrose 4-phosphate: step 3/5. In terms of biological role, catalyzes the reversible conversion of 3-phosphohydroxypyruvate to phosphoserine and of 3-hydroxy-2-oxo-4-phosphonooxybutanoate to phosphohydroxythreonine. In Drosophila melanogaster (Fruit fly), this protein is Phosphoserine aminotransferase.